We begin with the raw amino-acid sequence, 548 residues long: Zinc metalloproteinase (548 aa).

An N-terminal signal peptide occupies residues 1–28 (MKKYYAVTGIALAVGMLCTTQLAGATQA). Histidine 362 contacts Zn(2+). Residue glutamate 363 is part of the active site. Residues histidine 366 and glutamate 386 each coordinate Zn(2+). The disordered stretch occupies residues 440-459 (SNWKPTATNPNDNNDQGGVH). Residues 442-459 (WKPTATNPNDNNDQGGVH) show a composition bias toward polar residues. Histidine 459 (proton donor) is an active-site residue.

The protein belongs to the peptidase M4 family. The cofactor is Ca(2+). It depends on Zn(2+) as a cofactor.

Its subcellular location is the secreted. It is found in the cell wall. In terms of biological role, zinc metalloprotease with hemolytic properties. The sequence is that of Zinc metalloproteinase (hly) from Renibacterium salmoninarum.